A 284-amino-acid polypeptide reads, in one-letter code: Bifunctional protein FolD (284 aa).

NADP(+)-binding positions include 166–168 (GAS), S191, and I232.

The protein belongs to the tetrahydrofolate dehydrogenase/cyclohydrolase family. Homodimer.

The catalysed reaction is (6R)-5,10-methylene-5,6,7,8-tetrahydrofolate + NADP(+) = (6R)-5,10-methenyltetrahydrofolate + NADPH. It catalyses the reaction (6R)-5,10-methenyltetrahydrofolate + H2O = (6R)-10-formyltetrahydrofolate + H(+). The protein operates within one-carbon metabolism; tetrahydrofolate interconversion. In terms of biological role, catalyzes the oxidation of 5,10-methylenetetrahydrofolate to 5,10-methenyltetrahydrofolate and then the hydrolysis of 5,10-methenyltetrahydrofolate to 10-formyltetrahydrofolate. This is Bifunctional protein FolD from Thiobacillus denitrificans (strain ATCC 25259 / T1).